A 420-amino-acid chain; its full sequence is Glucose-1-phosphate adenylyltransferase (420 aa).

Residues Tyr-107, Gly-172, 187 to 188, and Ser-205 contribute to the alpha-D-glucose 1-phosphate site; that span reads EK.

It belongs to the bacterial/plant glucose-1-phosphate adenylyltransferase family. Homotetramer.

It catalyses the reaction alpha-D-glucose 1-phosphate + ATP + H(+) = ADP-alpha-D-glucose + diphosphate. It functions in the pathway glycan biosynthesis; glycogen biosynthesis. Its function is as follows. Involved in the biosynthesis of ADP-glucose, a building block required for the elongation reactions to produce glycogen. Catalyzes the reaction between ATP and alpha-D-glucose 1-phosphate (G1P) to produce pyrophosphate and ADP-Glc. In Rhizobium rhizogenes (strain K84 / ATCC BAA-868) (Agrobacterium radiobacter), this protein is Glucose-1-phosphate adenylyltransferase.